Consider the following 473-residue polypeptide: Suppressor of SWI4 1 homolog (473 aa).

Residues 29–292 enclose the Brix domain; it reads PHSFVFTRGC…LIKVQEGVGE (264 aa). Phosphoserine occurs at positions 238 and 240. The segment at 323 to 473 is disordered; it reads AQRQAQQAQN…GRGRPRKRVA (151 aa). Over residues 324–334 the composition is skewed to low complexity; it reads QRQAQQAQNVQ. Over residues 335-360 the composition is skewed to basic and acidic residues; it reads RKQEQREAHRKKSLEGMKKARVRGGD. A compositionally biased stretch (acidic residues) spans 376-388; that stretch reads GEDDDEQEDDDIE. Over residues 407 to 421 the composition is skewed to basic residues; that stretch reads KRKRLAKSPGQKRKR. Basic and acidic residues predominate over residues 422–444; it reads REMDRGRGRLCDQKFPKPKDKSH. N6-acetyllysine is present on K438. A compositionally biased stretch (basic residues) spans 464 to 473; that stretch reads GRGRPRKRVA.

The protein localises to the nucleus. It localises to the nucleolus. In terms of biological role, may have a role in cell growth. This chain is Suppressor of SWI4 1 homolog (PPAN), found in Pongo abelii (Sumatran orangutan).